Here is a 365-residue protein sequence, read N- to C-terminus: Uroporphyrinogen decarboxylase (365 aa).

The segment covering 1–17 (MSANDSPSGQQTTTSAS) has biased composition (polar residues). The interval 1-20 (MSANDSPSGQQTTTSASLDA) is disordered. Substrate contacts are provided by residues 48-52 (RQAGR), Asp-97, Tyr-172, Ser-227, and His-341.

This sequence belongs to the uroporphyrinogen decarboxylase family. Homodimer.

It is found in the cytoplasm. The catalysed reaction is uroporphyrinogen III + 4 H(+) = coproporphyrinogen III + 4 CO2. It participates in porphyrin-containing compound metabolism; protoporphyrin-IX biosynthesis; coproporphyrinogen-III from 5-aminolevulinate: step 4/4. Functionally, catalyzes the decarboxylation of four acetate groups of uroporphyrinogen-III to yield coproporphyrinogen-III. This Streptomyces griseus subsp. griseus (strain JCM 4626 / CBS 651.72 / NBRC 13350 / KCC S-0626 / ISP 5235) protein is Uroporphyrinogen decarboxylase.